A 493-amino-acid chain; its full sequence is uncharacterized protein (493 aa).

8-37 (DFLVVGGGTCGCVVAARLSEDPSATVMLLE) is a binding site for FAD. His-429 (proton acceptor) is an active-site residue.

It belongs to the GMC oxidoreductase family. The cofactor is FAD.

This is an uncharacterized protein from Rhodococcus erythropolis (Arthrobacter picolinophilus).